Here is a 232-residue protein sequence, read N- to C-terminus: MNKILLVDDDRELTSLLKELLEMEGFNVIVAHDGEQALDLLDDSIDLLLLDVMMPKKNGIDTLKALRQTHQTPVIMLTARGSELDRVLGLELGADDYLPKPFNDRELVARIRAILRRSHWSEQQQNNDNGSPTLEVDALVLNPGRQEASFDGQTLELTGTEFTLLYLLAQHLGQVVSREHLSQEVLGKRLTPFDRAIDMHISNLRRKLPDRKDGHPWFKTLRGRGYLMVSAS.

The Response regulatory domain occupies 3–115 (KILLVDDDRE…ELVARIRAIL (113 aa)). D51 carries the 4-aspartylphosphate modification. A DNA-binding region (ompR/PhoB-type) is located at residues 131 to 230 (SPTLEVDALV…LRGRGYLMVS (100 aa)).

Phosphorylated by CpxA.

Its subcellular location is the cytoplasm. Functionally, member of the two-component regulatory system CpxA/CpxR. This system combats a variety of extracytoplasmic protein-mediated toxicities. It performs this function by increasing the synthesis of the periplasmic protease, DegP as well as that of CpxP protein. The sequence is that of Transcriptional regulatory protein CpxR (cpxR) from Escherichia coli O157:H7.